We begin with the raw amino-acid sequence, 187 residues long: Orotate phosphoribosyltransferase (187 aa).

Residues R99, K100, K103, H105, and D125–S133 contribute to the 5-phospho-alpha-D-ribose 1-diphosphate site. Orotate-binding residues include T129 and R157.

This sequence belongs to the purine/pyrimidine phosphoribosyltransferase family. PyrE subfamily. As to quaternary structure, homodimer. The cofactor is Mg(2+).

It catalyses the reaction orotidine 5'-phosphate + diphosphate = orotate + 5-phospho-alpha-D-ribose 1-diphosphate. It participates in pyrimidine metabolism; UMP biosynthesis via de novo pathway; UMP from orotate: step 1/2. Catalyzes the transfer of a ribosyl phosphate group from 5-phosphoribose 1-diphosphate to orotate, leading to the formation of orotidine monophosphate (OMP). The chain is Orotate phosphoribosyltransferase from Leptospira borgpetersenii serovar Hardjo-bovis (strain JB197).